The chain runs to 1132 residues: Protein CROWDED NUCLEI 1 (1132 aa).

Residues 1-31 are disordered; sequence MSTPLKVWQRWSTPTKATNPDSNGSSHGTGL. Over residues 10 to 28 the composition is skewed to polar residues; that stretch reads RWSTPTKATNPDSNGSSHG. The stretch at 73–714 forms a coiled coil; sequence LLIEKKEWSS…KKLKEQREQF (642 aa). Short sequence motifs (nuclear localization signal) lie at residues 379 to 386 and 693 to 700; these read EKREAEWK and IRKDVDDL. Residues serine 774 and serine 803 each carry the phosphoserine modification. Residues 849-859 show a composition bias toward basic and acidic residues; that stretch reads AESETGTKEVE. Disordered stretches follow at residues 849-871, 883-909, 924-1039, and 1061-1132; these read AESE…DQSD, SLSN…TRSV, INLY…VQQE, and GVST…FLTT. Residues 861–871 are compositionally biased toward polar residues; that stretch reads TNVNSDGDQSD. 2 positions are modified to phosphoserine: serine 865 and serine 883. Positions 895 to 907 are enriched in basic residues; sequence MKGKGKARTRRTR. At serine 908 the chain carries Phosphoserine. Phosphoserine occurs at positions 1093, 1105, and 1112. The span at 1095–1105 shows a compositional bias: basic and acidic residues; the sequence is DVNKTPLRADS.

Belongs to the CRWN family. Core component of the LINC complex which is composed of inner nuclear membrane SUN domain-containing proteins coupled to outer nuclear membrane WIP and WIT proteins. The LINC complex also involves nucleoskeletal proteins CRWN/LINC and possibly KAKU4 and the cytoskeletal myosin KAKU1. Interacts with SUN1 and SUN2. Binds to KAKU4. Expressed at low levels in roots, leaves, flowers and flower stalks.

The protein resides in the nucleus membrane. Its subcellular location is the nucleus. It is found in the nucleoplasm. The protein localises to the nucleus lamina. In terms of biological role, component of SUN-protein-containing multivariate complexes also called LINC complexes which link the nucleoskeleton and cytoskeleton by providing versatile outer nuclear membrane attachment sites for cytoskeletal filaments. Required for nucleus structure organization (e.g. size and shape). The polypeptide is Protein CROWDED NUCLEI 1 (Arabidopsis thaliana (Mouse-ear cress)).